Reading from the N-terminus, the 432-residue chain is Peptidase B (432 aa).

Residues Lys196 and Asp201 each contribute to the Mn(2+) site. Lys208 is an active-site residue. Positions 219, 278, and 280 each coordinate Mn(2+). Residue Arg282 is part of the active site.

The protein belongs to the peptidase M17 family. Homohexamer. The cofactor is Mn(2+).

Its subcellular location is the cytoplasm. It carries out the reaction Release of an N-terminal amino acid, Xaa, from a peptide or arylamide. Xaa is preferably Glu or Asp but may be other amino acids, including Leu, Met, His, Cys and Gln.. Functionally, probably plays an important role in intracellular peptide degradation. This Vibrio parahaemolyticus serotype O3:K6 (strain RIMD 2210633) protein is Peptidase B.